The chain runs to 420 residues: 3-oxoacyl-[acyl-carrier-protein] synthase 2 (420 aa).

Residues 13–419 (FPNVVVTGIA…GHNVAIAFGC (407 aa)) form the Ketosynthase family 3 (KS3) domain. Residues cysteine 173, histidine 314, and histidine 349 each act as for beta-ketoacyl synthase activity in the active site.

This sequence belongs to the thiolase-like superfamily. Beta-ketoacyl-ACP synthases family.

The protein resides in the cytoplasm. The catalysed reaction is an ultra-long-chain di-unsaturated fatty acyl-[ACP] + malonyl-[ACP] + H(+) = a 3-oxo-ultra-long-chain di-unsaturated fatty acyl-[ACP] + holo-[ACP] + CO2. Its pathway is lipid metabolism; mycolic acid biosynthesis. Part of the mycobacterial fatty acid elongation system FAS-II, which is involved in mycolic acid biosynthesis. Catalyzes the elongation of long chain acyl-ACP substrates by the addition of two carbons from malonyl-ACP to an acyl acceptor. Involved in extension of the mycolate chains to full lengths and produces longer chain multiunsaturated hydrocarbons averaging 54 carbons in length. This Mycobacterium leprae (strain TN) protein is 3-oxoacyl-[acyl-carrier-protein] synthase 2 (kasB).